The chain runs to 336 residues: Phospho-N-acetylmuramoyl-pentapeptide-transferase (336 aa).

The next 10 helical transmembrane spans lie at 3-23, 53-73, 78-98, 118-138, 143-163, 174-194, 200-220, 226-246, 251-271, and 316-336; these read LTLIAAIISFMVSAFTMPYFI, GGTVFLLVATAVSLLVSLFSI, SLALISGILSIVVIYGIIGFL, LALQLAGGLMFYFLHVSPSGI, VFGYQLSLGIFYLFFVLFWVV, GIDGLASISVVISLVTYGVIA, FDVLLLIGAMIGALLGFFCFN, VFMGDVGSLALGAMLAAISIA, WTLLIIGIVYVLETSSVMLQV, and AFLWGVGSLASLLVLAILYVF.

It belongs to the glycosyltransferase 4 family. MraY subfamily. The cofactor is Mg(2+).

Its subcellular location is the cell membrane. The enzyme catalyses UDP-N-acetyl-alpha-D-muramoyl-L-alanyl-gamma-D-glutamyl-L-lysyl-D-alanyl-D-alanine + di-trans,octa-cis-undecaprenyl phosphate = Mur2Ac(oyl-L-Ala-gamma-D-Glu-L-Lys-D-Ala-D-Ala)-di-trans,octa-cis-undecaprenyl diphosphate + UMP. The protein operates within cell wall biogenesis; peptidoglycan biosynthesis. Catalyzes the initial step of the lipid cycle reactions in the biosynthesis of the cell wall peptidoglycan: transfers peptidoglycan precursor phospho-MurNAc-pentapeptide from UDP-MurNAc-pentapeptide onto the lipid carrier undecaprenyl phosphate, yielding undecaprenyl-pyrophosphoryl-MurNAc-pentapeptide, known as lipid I. This is Phospho-N-acetylmuramoyl-pentapeptide-transferase from Streptococcus pyogenes serotype M3 (strain ATCC BAA-595 / MGAS315).